A 388-amino-acid polypeptide reads, in one-letter code: Dual-specificity RNA methyltransferase RlmN (388 aa).

Glutamate 109 serves as the catalytic Proton acceptor. One can recognise a Radical SAM core domain in the interval glutamate 115–aspartate 354. The cysteines at positions 122 and 359 are disulfide-linked. Cysteine 129, cysteine 133, and cysteine 136 together coordinate [4Fe-4S] cluster. Residues glycine 183 to glutamate 184, serine 215, serine 237 to histidine 239, and asparagine 316 contribute to the S-adenosyl-L-methionine site. The active-site S-methylcysteine intermediate is cysteine 359.

The protein belongs to the radical SAM superfamily. RlmN family. Requires [4Fe-4S] cluster as cofactor.

The protein localises to the cytoplasm. It catalyses the reaction adenosine(2503) in 23S rRNA + 2 reduced [2Fe-2S]-[ferredoxin] + 2 S-adenosyl-L-methionine = 2-methyladenosine(2503) in 23S rRNA + 5'-deoxyadenosine + L-methionine + 2 oxidized [2Fe-2S]-[ferredoxin] + S-adenosyl-L-homocysteine. The catalysed reaction is adenosine(37) in tRNA + 2 reduced [2Fe-2S]-[ferredoxin] + 2 S-adenosyl-L-methionine = 2-methyladenosine(37) in tRNA + 5'-deoxyadenosine + L-methionine + 2 oxidized [2Fe-2S]-[ferredoxin] + S-adenosyl-L-homocysteine. Functionally, specifically methylates position 2 of adenine 2503 in 23S rRNA and position 2 of adenine 37 in tRNAs. m2A2503 modification seems to play a crucial role in the proofreading step occurring at the peptidyl transferase center and thus would serve to optimize ribosomal fidelity. The sequence is that of Dual-specificity RNA methyltransferase RlmN from Klebsiella pneumoniae (strain 342).